Reading from the N-terminus, the 1124-residue chain is Phytochrome type A (1124 aa).

The segment covering 1–19 (MSTTRPSQSSNNSGRSRNS) has biased composition (low complexity). The tract at residues 1–21 (MSTTRPSQSSNNSGRSRNSAR) is disordered. Residues 218–401 (SMERLCDTMV…VFAIHVNKEI (184 aa)) enclose the GAF domain. Cys-323 serves as a coordination point for phytochromobilin. PAS domains lie at 617–687 (VTSE…LQGE) and 750–821 (DYKA…VNFG). The Histidine kinase domain occupies 901–1120 (YMKRQIRNPL…ILSVELAAAH (220 aa)).

It belongs to the phytochrome family. As to quaternary structure, homodimer. Post-translationally, contains one covalently linked phytochromobilin chromophore.

Regulatory photoreceptor which exists in two forms that are reversibly interconvertible by light: the Pr form that absorbs maximally in the red region of the spectrum and the Pfr form that absorbs maximally in the far-red region. Photoconversion of Pr to Pfr induces an array of morphogenic responses, whereas reconversion of Pfr to Pr cancels the induction of those responses. Pfr controls the expression of a number of nuclear genes including those encoding the small subunit of ribulose-bisphosphate carboxylase, chlorophyll A/B binding protein, protochlorophyllide reductase, rRNA, etc. It also controls the expression of its own gene(s) in a negative feedback fashion. This Lathyrus sativus (White vetchling) protein is Phytochrome type A (PHYA).